The sequence spans 241 residues: Probable histone-lysine N-methyltransferase set-23 (241 aa).

Residues 25 to 85 (QGCDCETQCS…SCRNKVVQNG (61 aa)) form the Pre-SET domain. Zn(2+) contacts are provided by Cys27, Cys29, Cys33, Cys39, Cys41, Cys64, Cys68, Cys70, and Cys77. The 123-residue stretch at 88–210 (KKLKIFSTSE…VGEELSYDYG (123 aa)) folds into the SET domain. S-adenosyl-L-methionine is bound by residues 98 to 100 (KGD), Asp138, Tyr140, Arg167, and 170 to 171 (NH). The Zn(2+) site is built by Cys173, Cys222, Cys224, and Cys229. Residues 218–234 (NRKLCLCRSENCRKYLP) form the Post-SET domain.

The protein belongs to the class V-like SAM-binding methyltransferase superfamily. Histone-lysine methyltransferase family. Suvar3-9 subfamily.

It localises to the nucleus. It is found in the chromosome. The enzyme catalyses L-lysyl-[histone] + S-adenosyl-L-methionine = N(6)-methyl-L-lysyl-[histone] + S-adenosyl-L-homocysteine + H(+). Its function is as follows. Probable histone methyltransferase required for embryonic development. The chain is Probable histone-lysine N-methyltransferase set-23 from Caenorhabditis briggsae.